The following is a 249-amino-acid chain: NAD(P)H-hydrate epimerase (249 aa).

The YjeF N-terminal domain maps to 11–233 (AQQIDVELMS…ELGKKHELNI (223 aa)). 62 to 66 (NQGGD) contributes to the (6S)-NADPHX binding site. Positions 63 and 127 each coordinate K(+). (6S)-NADPHX is bound by residues 131-137 (GFSFQPP) and D162. S165 provides a ligand contact to K(+).

Belongs to the NnrE/AIBP family. K(+) serves as cofactor.

It localises to the cytoplasm. The protein resides in the mitochondrion. It carries out the reaction (6R)-NADHX = (6S)-NADHX. The enzyme catalyses (6R)-NADPHX = (6S)-NADPHX. Functionally, catalyzes the epimerization of the S- and R-forms of NAD(P)HX, a damaged form of NAD(P)H that is a result of enzymatic or heat-dependent hydration. This is a prerequisite for the S-specific NAD(P)H-hydrate dehydratase to allow the repair of both epimers of NAD(P)HX. The polypeptide is NAD(P)H-hydrate epimerase (Cryptococcus neoformans var. neoformans serotype D (strain JEC21 / ATCC MYA-565) (Filobasidiella neoformans)).